The chain runs to 1040 residues: Multidrug resistance protein MdtB (1040 aa).

A run of 12 helical transmembrane segments spans residues 16-36 (FIMR…AGII), 342-362 (DTQF…YLFL), 369-389 (IIPG…MVFL), 396-416 (LTLM…IVVI), 440-460 (IGFT…PLLF), 472-492 (FAVT…TLTP), 537-557 (WLTL…WVFI), 863-883 (LGST…VLGV), 888-908 (FIHP…ALLA), 911-931 (LAGS…IGIV), 968-988 (ILMT…STGV), and 998-1018 (IGMV…TPVI).

This sequence belongs to the resistance-nodulation-cell division (RND) (TC 2.A.6) family. MdtB subfamily. Part of a tripartite efflux system composed of MdtA, MdtB and MdtC. MdtB forms a heteromultimer with MdtC.

It is found in the cell inner membrane. The sequence is that of Multidrug resistance protein MdtB from Klebsiella pneumoniae subsp. pneumoniae (strain ATCC 700721 / MGH 78578).